We begin with the raw amino-acid sequence, 406 residues long: Eukaryotic initiation factor 4A-I (406 aa).

Residues 1 to 21 (MSASQDSRSRDNGPDGMEPEG) form a disordered region. At Ser2 the chain carries N-acetylserine. The residue at position 4 (Ser4) is a Phosphoserine. The Q motif signature appears at 32-60 (DSFDDMNLSESLLRGIYAYGFEKPSAIQQ). Residues 63 to 234 (ILPCIKGYDV…KKFMRDPIRI (172 aa)) form the Helicase ATP-binding domain. 76-83 (AQSGTGKT) lines the ATP pocket. At Lys118 the chain carries N6-acetyllysine. Lys146 participates in a covalent cross-link: Glycyl lysine isopeptide (Lys-Gly) (interchain with G-Cter in SUMO2). A Phosphothreonine modification is found at Thr158. Lys174 is subject to N6-acetyllysine. The DEAD box signature appears at 182–185 (DEAD). Lys193 carries the N6-acetyllysine modification. A Glycyl lysine isopeptide (Lys-Gly) (interchain with G-Cter in SUMO2) cross-link involves residue Lys225. Lys238 carries the N6-acetyllysine; alternate modification. Lys238 participates in a covalent cross-link: Glycyl lysine isopeptide (Lys-Gly) (interchain with G-Cter in SUMO2); alternate. Positions 245–406 (GIRQFYINVE…EMPLNVADLI (162 aa)) constitute a Helicase C-terminal domain. Glycyl lysine isopeptide (Lys-Gly) (interchain with G-Cter in SUMO2) cross-links involve residues Lys309, Lys369, and Lys381.

Belongs to the DEAD box helicase family. eIF4A subfamily. In terms of assembly, eIF4F is a multi-subunit complex, the composition of which varies with external and internal environmental conditions. It is composed of at least EIF4A, EIF4E and EIF4G1/EIF4G3. Interacts with PAIP1, EIF4E and UPF2. Found in a complex with XPO7, EIF4A1, ARHGAP1, VPS26A, VPS29, VPS35 and SFN. May interact with NOM1. Interacts with PDCD4; this interferes with the interaction between EIF4A and EIF4G. Interacts with RBM4. Interacts with DDX3X in an RNA-independent manner. Interacts with PKP1 (via N-terminus); the interaction promotes EIF4A1 recruitment to the cap-dependent translation complex and EIF4A1 ATPase activity.

Its subcellular location is the cytoplasm. It is found in the perinuclear region. It localises to the cell membrane. The protein resides in the stress granule. The catalysed reaction is ATP + H2O = ADP + phosphate + H(+). Its function is as follows. ATP-dependent RNA helicase which is a subunit of the eIF4F complex involved in cap recognition and is required for mRNA binding to ribosome. In the current model of translation initiation, eIF4A unwinds RNA secondary structures in the 5'-UTR of mRNAs which is necessary to allow efficient binding of the small ribosomal subunit, and subsequent scanning for the initiator codon. As a result, promotes cell proliferation and growth. The chain is Eukaryotic initiation factor 4A-I (EIF4A1) from Macaca fascicularis (Crab-eating macaque).